The sequence spans 219 residues: MTLSRVHQQLITFPAVKTSPAGYLPDPASINKLQIPTSSKFSFLTGKGKSMLRKKKNDSFTNGVRDQDKLGPKLTETVKRKLSLGARILQMGGLEKIYKRLFKVSDEEKLFKAYQCYLSTTAGPIAGLLFISSKKIAFCSERSIKVASPQGELNRVHYKVSIPLCKINGVNQSQNTTKPSQKYLEVVTVDGFDFWFMGFLSYQKAFNCLEQALSLSFKQ.

The 79-residue stretch at 96-174 (KIYKRLFKVS…CKINGVNQSQ (79 aa)) folds into the GRAM domain.

Belongs to the GEM family.

This is Putative GEM-like protein 8 from Arabidopsis thaliana (Mouse-ear cress).